Here is a 432-residue protein sequence, read N- to C-terminus: Adenylosuccinate synthetase (432 aa).

GTP-binding positions include 13–19 (GDEGKGK) and 41–43 (GHT). Residue aspartate 14 is the Proton acceptor of the active site. Aspartate 14 and glycine 41 together coordinate Mg(2+). IMP-binding positions include 14–17 (DEGK), 39–42 (NAGH), threonine 131, arginine 145, glutamine 226, threonine 241, and arginine 305. Histidine 42 serves as the catalytic Proton donor. 301-307 (SVTGRAR) is a binding site for substrate. GTP is bound by residues arginine 307, 333–335 (KLD), and 416–418 (STG).

Belongs to the adenylosuccinate synthetase family. Homodimer. The cofactor is Mg(2+).

Its subcellular location is the cytoplasm. It carries out the reaction IMP + L-aspartate + GTP = N(6)-(1,2-dicarboxyethyl)-AMP + GDP + phosphate + 2 H(+). It participates in purine metabolism; AMP biosynthesis via de novo pathway; AMP from IMP: step 1/2. In terms of biological role, plays an important role in the de novo pathway of purine nucleotide biosynthesis. Catalyzes the first committed step in the biosynthesis of AMP from IMP. The chain is Adenylosuccinate synthetase from Neisseria meningitidis serogroup C (strain 053442).